Reading from the N-terminus, the 108-residue chain is uncharacterized protein (108 aa).

The disordered stretch occupies residues M1–L23.

This is an uncharacterized protein from Ureaplasma parvum serovar 3 (strain ATCC 700970).